We begin with the raw amino-acid sequence, 206 residues long: Small ribosomal subunit protein uS4 (206 aa).

The S4 RNA-binding domain maps to 96–156; sequence TRLDNVVYRM…EKSRTQARIK (61 aa).

The protein belongs to the universal ribosomal protein uS4 family. Part of the 30S ribosomal subunit. Contacts protein S5. The interaction surface between S4 and S5 is involved in control of translational fidelity.

One of the primary rRNA binding proteins, it binds directly to 16S rRNA where it nucleates assembly of the body of the 30S subunit. Functionally, with S5 and S12 plays an important role in translational accuracy. This Shewanella amazonensis (strain ATCC BAA-1098 / SB2B) protein is Small ribosomal subunit protein uS4.